The sequence spans 414 residues: Testis-specific Y-encoded-like protein 4 (414 aa).

2 disordered regions span residues 1 to 129 (MSGL…AGQK) and 391 to 414 (PRRG…FQSG). Positions 24–40 (ASGDPDRDQCQGLREET) are enriched in basic and acidic residues. Positions 101 to 112 (EAASAAEAADSS) are enriched in low complexity.

The protein belongs to the nucleosome assembly protein (NAP) family.

This Homo sapiens (Human) protein is Testis-specific Y-encoded-like protein 4 (TSPYL4).